The following is a 321-amino-acid chain: MDIIRKISHFAGQTFGIWVIVFAVLGFSFPSLFTWISSYITIFLGIIMFGMGLTLQADDFKELVRKPWQVIIGVIAQYTIMPLVAFGLAFGLHLPAEIAVGVILVGCCPGGTASNVMTFLAKGNTALSVAVTTISTLLAPVVTPLLIMLFAKEWLPVSPGSLFISILQAVLFPIIAGLIVKMFFRKQVAKAVHALPLVSVIGIVAIVSAVVSGNRENLLQSGLLIFSVVILHNGIGYLLGFLCAKLLKMDYPSQKAIAIEVGMQNSGLGAALATAHFSPLSAVPSAIFSVWHNLSGSMLATYWSKKVKKKQAGSKSSNLSL.

At Met1–Lys6 the chain is on the extracellular side. The helical transmembrane segment at Ile7 to Phe29 threads the bilayer. Topologically, residues Pro30–Thr34 are cytoplasmic. Residues Trp35–Ala57 form a helical membrane-spanning segment. Over Asp58 to Gln69 the chain is Extracellular. A helical transmembrane segment spans residues Val70–Leu92. At His93 to Glu97 the chain is on the cytoplasmic side. Residues Ile98–Leu120 traverse the membrane as a helical segment. Topologically, residues Ala121–Val129 are extracellular. Residues Ala130–Phe150 traverse the membrane as a helical segment. Topologically, residues Ala151–Pro159 are cytoplasmic. The chain crosses the membrane as a helical span at residues Gly160–Val180. Topologically, residues Lys181–Lys190 are extracellular. The chain crosses the membrane as a helical span at residues Ala191–Val211. Over Ser212 to Ser221 the chain is Cytoplasmic. A helical membrane pass occupies residues Gly222 to Leu242. The Extracellular segment spans residues Cys243–Gly267. Residues Leu268–Phe288 form a helical membrane-spanning segment. Topologically, residues Ser289–Leu321 are cytoplasmic.

The protein belongs to the bile acid:sodium symporter (BASS) (TC 2.A.28) family.

Its subcellular location is the cell membrane. This is an uncharacterized protein from Bacillus subtilis (strain 168).